A 202-amino-acid polypeptide reads, in one-letter code: Small ribosomal subunit protein uS4 (202 aa).

The 63-residue stretch at 93–155 (RRLDNVVRRV…ENLKNLYRGV (63 aa)) folds into the S4 RNA-binding domain.

This sequence belongs to the universal ribosomal protein uS4 family. Part of the 30S ribosomal subunit. Contacts protein S5. The interaction surface between S4 and S5 is involved in control of translational fidelity.

Functionally, one of the primary rRNA binding proteins, it binds directly to 16S rRNA where it nucleates assembly of the body of the 30S subunit. Its function is as follows. With S5 and S12 plays an important role in translational accuracy. The protein is Small ribosomal subunit protein uS4 of Rhodopirellula baltica (strain DSM 10527 / NCIMB 13988 / SH1).